The following is a 392-amino-acid chain: Xyloside xylosyltransferase 1 (392 aa).

The Cytoplasmic portion of the chain corresponds to 1–19 (MGLLRGGAACARAMARLGA). Residues 20–42 (LRSHYCALLLAAALAVCAFYYLG) form a helical; Signal-anchor for type II membrane protein membrane-spanning segment. Residues 43–392 (SGRETFSSAT…GNCNTPIPED (350 aa)) are Lumenal-facing. 103–105 (MFT) is a binding site for UDP-alpha-D-xylose. A Mn(2+)-binding site is contributed by D225. L226 lines the UDP-alpha-D-xylose pocket. Residue D227 participates in Mn(2+) binding. Positions 262-265 (HTFW) are interaction with target proteins. The UDP-alpha-D-xylose site is built by S289, L327, and Q330. Residues Q330 and W359 each coordinate a glycoprotein. 2 disulfides stabilise this stretch: C349–C374 and C356–C385. H382 contacts Mn(2+). A glycoprotein is bound at residue N384.

This sequence belongs to the glycosyltransferase 8 family. As to quaternary structure, homodimer. Dimer formation may be essential for the retention in endoplasmic reticulum. Mg(2+) serves as cofactor. Requires Mn(2+) as cofactor.

It localises to the endoplasmic reticulum membrane. It carries out the reaction 3-O-[alpha-D-xylosyl-(1-&gt;3)-beta-D-glucosyl]-L-seryl-[EGF-like domain protein] + UDP-alpha-D-xylose = 3-O-[alpha-D-xylosyl-(1-&gt;3)-alpha-D-xylosyl-(1-&gt;3)-beta-D-glucosyl]-L-seryl-[EGF-like domain protein] + UDP + H(+). Functionally, alpha-1,3-xylosyltransferase, which elongates the O-linked xylose-glucose disaccharide attached to EGF-like repeats in the extracellular domain of target proteins by catalyzing the addition of the second xylose. Known targets include Notch proteins and coagulation factors, such as F9. This is Xyloside xylosyltransferase 1 (Xxylt1) from Mus musculus (Mouse).